The chain runs to 4022 residues: Intermembrane lipid transfer protein VPS13B (4022 aa).

The region spanning 2–102 (LESYVTPILM…KDGIQDDHES (101 aa)) is the Chorein N-terminal domain. The disordered stretch occupies residues 100 to 134 (HESCGSNSTNRSTAESTKSSIKPRRMQQAAPTDPD). Residues 103–119 (CGSNSTNRSTAESTKSS) are compositionally biased toward polar residues. A phosphoserine mark is found at S414, S999, S1002, and S1033. Residues 1247-1314 (NLSPTSPETM…SVTLEQTTSN (68 aa)) form a disordered region. Composition is skewed to polar residues over residues 1264-1292 (PVRS…TEGD) and 1302-1314 (FSDS…TTSN). Position 1815 is a phosphoserine (S1815). A compositionally biased stretch (basic and acidic residues) spans 1860–1872 (KSQEQKNNEKTDK). The tract at residues 1860–1880 (KSQEQKNNEKTDKSSLNLPEV) is disordered. The region spanning 2631-2716 (HFVICNDTQE…RTASLIIKVQ (86 aa)) is the SHR-BD domain. Residues 3908 to 4022 (AFPVTEIDCA…KNKALRKGFP (115 aa)) are localizes the protein to the Golgi apparatus.

It belongs to the VPS13 family. Interacts with STX6. Interacts with STX12. Interacts with RAB6A isoform 1 (GTP-bound) and isoform 2 (GTP-bound). Interacts with RAB6B (GTP-bound). In terms of tissue distribution, widely expressed. There is apparent differential expression of different transcripts. In fetal brain, lung, liver, and kidney, two transcripts of 2 and 5 kb are identified. These transcripts are also seen in all adult tissues analyzed. A larger transcript (12-14 kb) is expressed in prostate, testis, ovary, and colon in the adult. Expression is very low in adult brain tissue. Expressed in peripheral blood lymphocytes. Isoform 1 and isoform 2 are expressed in brain and retina. Isoform 2 is expressed ubiquitously.

It localises to the recycling endosome membrane. It is found in the cytoplasmic vesicle. The protein resides in the secretory vesicle. Its subcellular location is the acrosome membrane. The protein localises to the golgi apparatus. It localises to the cis-Golgi network membrane. It is found in the endoplasmic reticulum-Golgi intermediate compartment membrane. The protein resides in the trans-Golgi network membrane. Its subcellular location is the early endosome membrane. The protein localises to the lysosome membrane. Its function is as follows. Mediates the transfer of lipids between membranes at organelle contact sites. Binds phosphatidylinositol 3-phosphate. Functions as a tethering factor in the slow endocytic recycling pathway, to assist traffic between early and recycling endosomes. Involved in the transport of proacrosomal vesicles to the nuclear dense lamina (NDL) during spermatid development. Plays a role in the assembly of the Golgi apparatus, possibly by mediating trafficking to the Golgi membrane. Plays a role in the development of the nervous system, and may be required for neuron projection development. May also play a role during adipose tissue development. Required for maintenance of the ocular lens. In Homo sapiens (Human), this protein is Intermembrane lipid transfer protein VPS13B (VPS13B).